We begin with the raw amino-acid sequence, 558 residues long: Formate--tetrahydrofolate ligase (558 aa).

67–74 (TPAGEGKT) provides a ligand contact to ATP.

The protein belongs to the formate--tetrahydrofolate ligase family.

It catalyses the reaction (6S)-5,6,7,8-tetrahydrofolate + formate + ATP = (6R)-10-formyltetrahydrofolate + ADP + phosphate. It participates in one-carbon metabolism; tetrahydrofolate interconversion. The chain is Formate--tetrahydrofolate ligase from Sphingobium sp. (strain NBRC 103272 / SYK-6).